We begin with the raw amino-acid sequence, 249 residues long: MFDPLLEKLHSSIRIQGGETAAVPDGLRECRNEKKNSLIRSWLWQVPGFRRWRVSRLDAGESLQVLNSVAYPNYNIDQPLMGLDLLWFGKRQKLVAILDFQPLIQDHSYLERHFQGLKALQNRFPELSGEETMRLFDPNQYFSPWLLFCRGGAEKATNSLPEAFNAFLHCYWELHQQNSKKASLIPAAEVKQLQIAYDIYSAERDPAHGLFTSHFGKAWSDRFLHEFLFPASTKADSSPPADADYDLPR.

It belongs to the HY2 family.

It carries out the reaction 15,16-dihydrobiliverdin + oxidized 2[4Fe-4S]-[ferredoxin] = biliverdin IXalpha + reduced 2[4Fe-4S]-[ferredoxin] + 2 H(+). In terms of biological role, catalyzes the two-electron reduction of biliverdin IX-alpha at the C15 methine bridge. The protein is 15,16-dihydrobiliverdin:ferredoxin oxidoreductase of Prochlorococcus marinus (strain MIT 9303).